A 793-amino-acid polypeptide reads, in one-letter code: Serine/threonine-protein kinase CLA4 (793 aa).

Positions 8 to 27 are disordered; that stretch reads RELSESDFQDIGPAPKPPPV. Positions 56–168 constitute a PH domain; the sequence is QRKKSGWVSY…WLDSIFSKCP (113 aa). The CRIB domain maps to 173-186; it reads VSSPTNFTHKVHVG. Disordered stretches follow at residues 243–369 and 383–476; these read AAAQ…ESPT and QKQL…RPTM. Composition is skewed to polar residues over residues 258–276, 312–337, and 355–369; these read TLSS…STPP, GVTT…QSGP, and LGNS…ESPT. In terms of domain architecture, Protein kinase spans 498-776; that stretch reads FQMIEKAGQG…TEELLHHSFF (279 aa). Residues 504 to 512 and lysine 545 contribute to the ATP site; that span reads AGQGASGSV. The active-site Proton acceptor is aspartate 644.

The protein belongs to the protein kinase superfamily. STE Ser/Thr protein kinase family. STE20 subfamily.

It carries out the reaction L-seryl-[protein] + ATP = O-phospho-L-seryl-[protein] + ADP + H(+). The catalysed reaction is L-threonyl-[protein] + ATP = O-phospho-L-threonyl-[protein] + ADP + H(+). Its function is as follows. Required for hyphal maturation and for septation. The sequence is that of Serine/threonine-protein kinase CLA4 (CLA4) from Eremothecium gossypii (strain ATCC 10895 / CBS 109.51 / FGSC 9923 / NRRL Y-1056) (Yeast).